We begin with the raw amino-acid sequence, 340 residues long: Protein RecA (340 aa).

ATP is bound at residue 67–74 (GNESSGKT).

This sequence belongs to the RecA family.

The protein localises to the cytoplasm. In terms of biological role, can catalyze the hydrolysis of ATP in the presence of single-stranded DNA, the ATP-dependent uptake of single-stranded DNA by duplex DNA, and the ATP-dependent hybridization of homologous single-stranded DNAs. It interacts with LexA causing its activation and leading to its autocatalytic cleavage. This chain is Protein RecA, found in Mycoplasma genitalium (strain ATCC 33530 / DSM 19775 / NCTC 10195 / G37) (Mycoplasmoides genitalium).